Here is a 341-residue protein sequence, read N- to C-terminus: Dihydroorotate dehydrogenase (quinone) (341 aa).

FMN is bound by residues 61-65 (AGLDK) and Thr-85. Lys-65 is a substrate binding site. 110–114 (NRMGF) serves as a coordination point for substrate. FMN-binding residues include Asn-138 and Asn-171. Asn-171 contributes to the substrate binding site. The active-site Nucleophile is the Ser-174. Asn-176 is a substrate binding site. FMN-binding residues include Lys-216 and Thr-244. Residue 245–246 (NT) participates in substrate binding. Residues Gly-267, Gly-296, and 317–318 (YS) contribute to the FMN site.

It belongs to the dihydroorotate dehydrogenase family. Type 2 subfamily. As to quaternary structure, monomer. FMN serves as cofactor.

The protein localises to the cell membrane. It carries out the reaction (S)-dihydroorotate + a quinone = orotate + a quinol. It participates in pyrimidine metabolism; UMP biosynthesis via de novo pathway; orotate from (S)-dihydroorotate (quinone route): step 1/1. Functionally, catalyzes the conversion of dihydroorotate to orotate with quinone as electron acceptor. This Pseudomonas fluorescens (strain SBW25) protein is Dihydroorotate dehydrogenase (quinone).